The primary structure comprises 347 residues: MNIINNSENVCTGVKIWLCICCIGILIMVFIGGITRLTHSGLSITEWNPVIGIFPPVTEKMWIAEKIKYMATPEYKYITSNITLTEFKKLYLIEYFHRLLGRIVGLVFLIPFLYFMYKQKLSKNLIHRFILIAFLILVQGVMGWYMVKSGLIDRPHVSHYRLAMHLLLALAIFYLLWKHFLLSVVHQIKCNIKVTNTSVFYIIISLITIQITCGALVAGLNAGLLSKDIPFLSDKVGLNDLLFIKPWWHNIYNNPITVQFIHEVIALLILIIAVITLLVLKVRIFPMYLLLALLLIQLTLGILTFIYNVPIILASLHQVTAFILFASSIYLLHYVKLLQIKYVENKI.

A run of 8 helical transmembrane segments spans residues Val-14–Ile-34, Phe-96–Met-116, Phe-129–Ser-149, Leu-162–Leu-182, Val-199–Gly-219, Phe-260–Leu-280, Met-287–Tyr-307, and Ile-311–Leu-331. His-262 is a heme binding site. Heme is bound at residue His-317.

Belongs to the COX15/CtaA family. Type 2 subfamily. As to quaternary structure, interacts with CtaB. It depends on heme b as a cofactor.

Its subcellular location is the cell membrane. The enzyme catalyses Fe(II)-heme o + 2 A + H2O = Fe(II)-heme a + 2 AH2. It participates in porphyrin-containing compound metabolism; heme A biosynthesis; heme A from heme O: step 1/1. Functionally, catalyzes the conversion of heme O to heme A by two successive hydroxylations of the methyl group at C8. The first hydroxylation forms heme I, the second hydroxylation results in an unstable dihydroxymethyl group, which spontaneously dehydrates, resulting in the formyl group of heme A. The sequence is that of Heme A synthase from Ehrlichia ruminantium (strain Gardel).